A 267-amino-acid polypeptide reads, in one-letter code: MNALLTNPFKERLRKGEVQIGLWLSSTTSYMAEIAATSGYDWLLIDGEHAPNTIQDLYHQLQAVAPYASQPVIRPVEGSKSLIKQVLDIGAQTLLIPMVDTADQARQVASATRYPPYGERGVGASVARAARWGRIENYMAQVNDSLCLLVQVESKTALDNLDEILDVEGIDGVFIGPADLSASLGYPDNAGHPEVQRIIETSIRRIRAAGKAAGFLAVAPDMAQQCLAWGANFVAVGVDTMLYSDALDQRLAMFKSGKNGPRIKGSY.

Catalysis depends on histidine 49, which acts as the Proton acceptor. Glutamine 151 is a binding site for substrate. Mg(2+) is bound at residue glutamate 153. Substrate is bound by residues alanine 178 and aspartate 179. A Mg(2+)-binding site is contributed by aspartate 179.

It belongs to the HpcH/HpaI aldolase family. KDR aldolase subfamily. In terms of assembly, homohexamer. Mg(2+) is required as a cofactor.

The catalysed reaction is 2-dehydro-3-deoxy-L-rhamnonate = (S)-lactaldehyde + pyruvate. Catalyzes the reversible retro-aldol cleavage of 2-keto-3-deoxy-L-rhamnonate (KDR) to pyruvate and lactaldehyde. This is 2-keto-3-deoxy-L-rhamnonate aldolase from Shigella sonnei (strain Ss046).